The following is a 663-amino-acid chain: UvrABC system protein B (663 aa).

Basic and acidic residues predominate over residues 1–10; it reads MIDKRDDKPF. Residues 1 to 23 are disordered; sequence MIDKRDDKPFKLKSKYKPSGDQP. The 388-residue stretch at 31-418 folds into the Helicase ATP-binding domain; the sequence is DNIEGGEKAQ…TNTIIEQIIR (388 aa). 44–51 is a binding site for ATP; the sequence is GATGTGKT. The Beta-hairpin signature appears at 97–120; the sequence is YYDYYQPEAYVPSSDTYIEKDSSV. The Helicase C-terminal domain maps to 435–601; sequence QMDDLLGEIN…TIKKDIRGLI (167 aa). The 36-residue stretch at 627–662 folds into the UVR domain; it reads KEAINALQKQMQEAAELLDFELAAQMRDLILELKLM.

The protein belongs to the UvrB family. Forms a heterotetramer with UvrA during the search for lesions. Interacts with UvrC in an incision complex.

Its subcellular location is the cytoplasm. Functionally, the UvrABC repair system catalyzes the recognition and processing of DNA lesions. A damage recognition complex composed of 2 UvrA and 2 UvrB subunits scans DNA for abnormalities. Upon binding of the UvrA(2)B(2) complex to a putative damaged site, the DNA wraps around one UvrB monomer. DNA wrap is dependent on ATP binding by UvrB and probably causes local melting of the DNA helix, facilitating insertion of UvrB beta-hairpin between the DNA strands. Then UvrB probes one DNA strand for the presence of a lesion. If a lesion is found the UvrA subunits dissociate and the UvrB-DNA preincision complex is formed. This complex is subsequently bound by UvrC and the second UvrB is released. If no lesion is found, the DNA wraps around the other UvrB subunit that will check the other stand for damage. The polypeptide is UvrABC system protein B (Streptococcus pyogenes serotype M3 (strain ATCC BAA-595 / MGAS315)).